A 191-amino-acid chain; its full sequence is MIRISDAAQAHFAKLLANQKEGTQIRVFVINPGTPNAECGVSYCPPDAVEATDTALKFDLLTAYVDELSAPYLEDAEIDFVTDQLGSQLTLKAPNAKMRKVADDAPLMERVEYALQSQINPQLAGHGGRVSLMEITDEGYAILQFGGGCNGCSMVDVTLKEGIEKQLLNEFPELKGVRDLTEHQRGEHSYY.

[4Fe-4S] cluster-binding residues include cysteine 149 and cysteine 152.

The protein belongs to the NfuA family. In terms of assembly, homodimer. The cofactor is [4Fe-4S] cluster.

Functionally, involved in iron-sulfur cluster biogenesis. Binds a 4Fe-4S cluster, can transfer this cluster to apoproteins, and thereby intervenes in the maturation of Fe/S proteins. Could also act as a scaffold/chaperone for damaged Fe/S proteins. The polypeptide is Fe/S biogenesis protein NfuA (Salmonella typhi).